Reading from the N-terminus, the 373-residue chain is ORC1-type DNA replication protein 2 (373 aa).

Residues 63–67 (TGKTS), tyrosine 205, and arginine 217 each bind ATP.

It belongs to the CDC6/cdc18 family.

Involved in regulation of DNA replication. The sequence is that of ORC1-type DNA replication protein 2 (cdc6-2) from Methanosarcina mazei (strain ATCC BAA-159 / DSM 3647 / Goe1 / Go1 / JCM 11833 / OCM 88) (Methanosarcina frisia).